The primary structure comprises 59 residues: Large ribosomal subunit protein bL32 (59 aa).

Residues 35–59 (EAHLRHHISPNGYYRGRKVVKTKND) are disordered. Basic residues predominate over residues 49–59 (RGRKVVKTKND).

The protein belongs to the bacterial ribosomal protein bL32 family.

In Polynucleobacter asymbioticus (strain DSM 18221 / CIP 109841 / QLW-P1DMWA-1) (Polynucleobacter necessarius subsp. asymbioticus), this protein is Large ribosomal subunit protein bL32.